A 260-amino-acid polypeptide reads, in one-letter code: 5'-nucleotidase SurE (260 aa).

Positions 8, 9, 43, and 96 each coordinate a divalent metal cation.

It belongs to the SurE nucleotidase family. The cofactor is a divalent metal cation.

Its subcellular location is the cytoplasm. It catalyses the reaction a ribonucleoside 5'-phosphate + H2O = a ribonucleoside + phosphate. Functionally, nucleotidase that shows phosphatase activity on nucleoside 5'-monophosphates. In Ruegeria pomeroyi (strain ATCC 700808 / DSM 15171 / DSS-3) (Silicibacter pomeroyi), this protein is 5'-nucleotidase SurE.